The sequence spans 133 residues: MIVDTSAIIAILRDEDDAAAYADALANADVRRLSAASYLECGIVLDSQRDPVISRALDELIEEAEFVVEPVTERQARLARAAYADFGRGSGHPAGLNFGDCLSYALAIDRREPLLWKGNDFGHTGVQRALDRR.

One can recognise a PINc domain in the interval 1–124; it reads MIVDTSAIIA…LWKGNDFGHT (124 aa). Mg(2+)-binding residues include Asp-4 and Asp-100.

This sequence belongs to the PINc/VapC protein family. Requires Mg(2+) as cofactor.

Its function is as follows. Toxic component of a type II toxin-antitoxin (TA) system. An RNase. Upon expression in M.smegmatis inhibits colony formation. Its toxic effect is neutralized by coexpression with cognate antitoxin VapB28. This is Ribonuclease VapC28 from Mycobacterium tuberculosis (strain ATCC 25618 / H37Rv).